A 425-amino-acid chain; its full sequence is GTPase Obg (425 aa).

The Obg domain occupies 1 to 158; sequence MFKDYAKIHV…LWLELELKLL (158 aa). The 171-residue stretch at 159-329 folds into the OBG-type G domain; that stretch reads ADVGLVGFPN…LIYRTYRLLE (171 aa). Residues 165-172, 190-194, 212-215, 282-285, and 310-312 each bind GTP; these read GFPNAGKS, FTTLE, DIPG, NKTD, and SAL. Mg(2+) is bound by residues Ser-172 and Thr-192. An OCT domain is found at 341–421; that stretch reads VPDERETDVT…IGRFEFEYSE (81 aa).

This sequence belongs to the TRAFAC class OBG-HflX-like GTPase superfamily. OBG GTPase family. As to quaternary structure, monomer. It depends on Mg(2+) as a cofactor.

Its subcellular location is the cytoplasm. An essential GTPase which binds GTP, GDP and possibly (p)ppGpp with moderate affinity, with high nucleotide exchange rates and a fairly low GTP hydrolysis rate. Plays a role in control of the cell cycle, stress response, ribosome biogenesis and in those bacteria that undergo differentiation, in morphogenesis control. In Desulforudis audaxviator (strain MP104C), this protein is GTPase Obg.